Consider the following 90-residue polypeptide: Probable Fe(2+)-trafficking protein (90 aa).

This sequence belongs to the Fe(2+)-trafficking protein family.

Its function is as follows. Could be a mediator in iron transactions between iron acquisition and iron-requiring processes, such as synthesis and/or repair of Fe-S clusters in biosynthetic enzymes. This is Probable Fe(2+)-trafficking protein from Chromohalobacter salexigens (strain ATCC BAA-138 / DSM 3043 / CIP 106854 / NCIMB 13768 / 1H11).